A 153-amino-acid polypeptide reads, in one-letter code: Small ribosomal subunit protein uS13 (153 aa).

The disordered stretch occupies residues 132–153 (VRGQRTRSHHRKGRTVGVIKKK). Basic residues predominate over residues 135–153 (QRTRSHHRKGRTVGVIKKK).

This sequence belongs to the universal ribosomal protein uS13 family. As to quaternary structure, part of the 30S ribosomal subunit. Forms a loose heterodimer with protein S19. Forms two bridges to the 50S subunit in the 70S ribosome.

Located at the top of the head of the 30S subunit, it contacts several helices of the 16S rRNA. In the 70S ribosome it contacts the 23S rRNA (bridge B1a) and protein L5 of the 50S subunit (bridge B1b), connecting the 2 subunits; these bridges are implicated in subunit movement. In Nanoarchaeum equitans (strain Kin4-M), this protein is Small ribosomal subunit protein uS13.